A 244-amino-acid chain; its full sequence is Proteasome subunit alpha (244 aa).

Belongs to the peptidase T1A family. The 20S proteasome core is composed of 14 alpha and 14 beta subunits that assemble into four stacked heptameric rings, resulting in a barrel-shaped structure. The two inner rings, each composed of seven catalytic beta subunits, are sandwiched by two outer rings, each composed of seven alpha subunits. The catalytic chamber with the active sites is on the inside of the barrel. Has a gated structure, the ends of the cylinder being occluded by the N-termini of the alpha-subunits. Is capped by the proteasome-associated ATPase, ARC.

Its subcellular location is the cytoplasm. It participates in protein degradation; proteasomal Pup-dependent pathway. With respect to regulation, the formation of the proteasomal ATPase ARC-20S proteasome complex, likely via the docking of the C-termini of ARC into the intersubunit pockets in the alpha-rings, may trigger opening of the gate for substrate entry. Interconversion between the open-gate and close-gate conformations leads to a dynamic regulation of the 20S proteasome proteolysis activity. Component of the proteasome core, a large protease complex with broad specificity involved in protein degradation. The protein is Proteasome subunit alpha of Xylanimonas cellulosilytica (strain DSM 15894 / JCM 12276 / CECT 5975 / KCTC 9989 / LMG 20990 / NBRC 107835 / XIL07).